Consider the following 449-residue polypeptide: Methionine aminopeptidase 2 (449 aa).

The segment at 1–91 is disordered; that stretch reads MAAQAAPELA…PRIPLTTLFP (91 aa). Residues 34–50 show a composition bias toward acidic residues; sequence EEAENEGDSEDDRDDEQ. A compositionally biased stretch (basic residues) spans 61–75; the sequence is KKKKKKRPKKKKKTA. Histidine 199 serves as a coordination point for substrate. Residues aspartate 219, aspartate 230, and histidine 299 each contribute to the a divalent metal cation site. Residue histidine 307 coordinates substrate. A divalent metal cation contacts are provided by glutamate 335 and glutamate 430.

The protein belongs to the peptidase M24A family. Methionine aminopeptidase eukaryotic type 2 subfamily. Co(2+) serves as cofactor. Requires Zn(2+) as cofactor. It depends on Mn(2+) as a cofactor. Fe(2+) is required as a cofactor.

The protein resides in the cytoplasm. The catalysed reaction is Release of N-terminal amino acids, preferentially methionine, from peptides and arylamides.. Its function is as follows. Cotranslationally removes the N-terminal methionine from nascent proteins. The N-terminal methionine is often cleaved when the second residue in the primary sequence is small and uncharged (Met-Ala-, Cys, Gly, Pro, Ser, Thr, or Val). This Trichophyton verrucosum (strain HKI 0517) protein is Methionine aminopeptidase 2.